Consider the following 257-residue polypeptide: Pimeloyl-[acyl-carrier protein] methyl ester esterase (257 aa).

An AB hydrolase-1 domain is found at 15-241 (HLVLLHGWGL…KAAHAPFVSH (227 aa)). Substrate-binding positions include W22, 82-83 (SL), and 143-147 (FLALQ). Residue S82 is the Nucleophile of the active site. Residues D207 and H235 contribute to the active site. Substrate is bound at residue H235.

It belongs to the AB hydrolase superfamily. Carboxylesterase BioH family. As to quaternary structure, monomer.

It localises to the cytoplasm. The enzyme catalyses 6-carboxyhexanoyl-[ACP] methyl ester + H2O = 6-carboxyhexanoyl-[ACP] + methanol + H(+). It participates in cofactor biosynthesis; biotin biosynthesis. The physiological role of BioH is to remove the methyl group introduced by BioC when the pimeloyl moiety is complete. It allows to synthesize pimeloyl-ACP via the fatty acid synthetic pathway through the hydrolysis of the ester bonds of pimeloyl-ACP esters. The chain is Pimeloyl-[acyl-carrier protein] methyl ester esterase from Klebsiella pneumoniae (strain 342).